The chain runs to 82 residues: Zinc finger CCCH domain-containing protein 13 (82 aa).

2 consecutive C3H1-type zinc fingers follow at residues 9–37 (RPGE…HPKN) and 55–82 (RPGQ…DHFT).

The protein is Zinc finger CCCH domain-containing protein 13 of Arabidopsis thaliana (Mouse-ear cress).